The sequence spans 776 residues: MQRPPPEDFSLKETKPHLGGGKVTGDKLTTTYDLVEQMQYLYVRVVKAKELPGKDLTGSCDPYVEVKLGNYRGTTRHFEKKSNPEWNQVFAFSKDRVQASYLEATVKDKDLVKDDLIGRVVFDLNEIPKRVPPDSPLAPQWYRLEDGKGQKVKGELMLAVWFGTQADEAFPEAWHSDAATVSGTDALANIRSKVYLSPKLWYLRVNVIEAQDLIPSDKGRYPEVFVKVIMGNQALRTRVSQSRSINPMWNEDLMFVVAEPFEEPLILSVEDRVAPNKDEVLGRCAVPLQYLDKRFDYRPVNSRWFNLEKHVIMEGGEKKEIKFASKIHMRICLEGGYHVLDESTHYSSDLRPTAKQLWKPNIGVLELGVLNATGLMPMKAKEGGRGTTDAYCVAKYGQKWIRTRTIIDSFTPRWNEQYTWEVFDPCTVVTVGVFDNCHLHGGDKNNGGGKDSRIGKVRIRLSTLEADRVYTHSYPLLVLHPSGVKKMGEIHLAVRFTCSSLLNMMYMYSMPLLPKMHYLHPLTVSQLDNLRHQATQIVSTRLTRAEPPLRKEVVEYMLDVGSHMWSMRRSKANFFRIMGVLSGIIAVGKWFEQICVWKNPITTVLIHILFIILVIYPELILPTIFLYLFLIGVWYYRWRPRHPPHMDTRLSHADSAHPDELDEEFDTFPTSRPSDIVRMRYDRLRSIAGRIQTVVGDLATQGERFQSLLSWRDPRATALFVLFCLIAAVILYITPFQVVAFAIGLYVLRHPRLRYKLPSVPLNFFRRLPARTDCML.

Over residues 1 to 16 the composition is skewed to basic and acidic residues; the sequence is MQRPPPEDFSLKETKP. The interval 1–23 is disordered; sequence MQRPPPEDFSLKETKPHLGGGKV. C2 domains follow at residues 22–142, 181–305, and 346–474; these read KVTG…PQWY, VSGT…SRWF, and YSSD…THSY. Asp-55, Asp-61, Asp-108, Asp-110, and Asp-115 together coordinate Ca(2+). Helical transmembrane passes span 577 to 597, 608 to 628, and 719 to 739; these read IMGVLSGIIAVGKWFEQICVW, ILFIILVIYPELILPTIFLYL, and LFVLFCLIAAVILYITPFQVV.

Belongs to the MCTP family. Interacts with and regulates subcellular localization and trafficking of STM. Requires Ca(2+) as cofactor. In terms of tissue distribution, highly expressed in both vegetative and inflorescence shoot apical meristems (SAMs). Accumulates in root meristems. Observed in flowers.

It is found in the endoplasmic reticulum membrane. It localises to the cytoplasm. The protein localises to the vesicle. The protein resides in the cell membrane. Its subcellular location is the endosome membrane. It is found in the golgi apparatus membrane. Required for proliferation and differentiation of shoot stem cells in the shoot apical meristem (SAM), thus determining the appropriate balance between the maintenance of shoot stem cells and their differentiation into other aboveground plant parts via the control of subcellular localization and intercellular trafficking of STM in the shoot apex. Prevents intracellular trafficking of STM to the plasma membrane in cells in the peripheral shoot meristem region thus facilitating STM recycling to the nucleus to maintain stem cells. May function as a signaling molecule by regulating the trafficking of other regulators. The polypeptide is FT-interacting protein 4 (Arabidopsis thaliana (Mouse-ear cress)).